A 505-amino-acid polypeptide reads, in one-letter code: MKFRIKTLPLRTERIAVVLSQDDAAELGLLPGDRVKVSYDGKSFVAEVEISQEFISSGEAGVCTFTAETCSLSEECVVEIVPFARPKSVEYIRKKLNGAKYEREEIKDIIGSISSDVLSDIEISAFILANEIVGMQNDEIQWMIEAMVEVGERVVFERGTVVDMHSIGGLPGNRFSLIAVPTVAAAGLLIPKTASRAITTASGTADTMEVLANVNLSVDEIKEITEEVGGVIAWNAPTGIAPADEKIIRVEYQLELSPKPHLMASVLSKKLGSGARFVAIDIPVGKKAKVENVDVGRGFANAMMEIGRNLNLKVATALTDGSQPLGRAIGPALEAREVLEVMERKVEGDLLEKSLGIAGILFEMTGIATNGYQHARKIFESGKTLEKFREIVAAQGGDESVKAEDVAVGDKTYTLHAAKEGYVREIDIAALNEIARTAGAPKDKGAGVYVHKKRGEVVKVGDPLLTIYAEKEWKLDNAIEVANTKQAFEISGVIIERYTMGRWWS.

AMP-binding positions include glycine 169, 195-200 (SRAITT), threonine 204, serine 265, and lysine 289.

This sequence belongs to the thymidine/pyrimidine-nucleoside phosphorylase family. Type 2 subfamily.

The catalysed reaction is AMP + phosphate = alpha-D-ribose 1,5-bisphosphate + adenine. The enzyme catalyses CMP + phosphate = cytosine + alpha-D-ribose 1,5-bisphosphate. It carries out the reaction UMP + phosphate = alpha-D-ribose 1,5-bisphosphate + uracil. Its function is as follows. Catalyzes the conversion of AMP and phosphate to adenine and ribose 1,5-bisphosphate (R15P). Exhibits phosphorylase activity toward CMP and UMP in addition to AMP. Functions in an archaeal AMP degradation pathway, together with R15P isomerase and RubisCO. The protein is AMP phosphorylase 2 of Archaeoglobus fulgidus (strain ATCC 49558 / DSM 4304 / JCM 9628 / NBRC 100126 / VC-16).